A 739-amino-acid polypeptide reads, in one-letter code: Catalase-peroxidase (739 aa).

A cross-link (tryptophyl-tyrosyl-methioninium (Trp-Tyr) (with M-253)) is located at residues 99-227; it reads WHSAGTYRMG…LAAVQMGLIY (129 aa). H100 serves as the catalytic Proton acceptor. A cross-link (tryptophyl-tyrosyl-methioninium (Tyr-Met) (with W-99)) is located at residues 227–253; that stretch reads YVNPEGPDGNPDPVASGRDVRETFARM. H268 is a heme b binding site.

This sequence belongs to the peroxidase family. Peroxidase/catalase subfamily. Homodimer or homotetramer. It depends on heme b as a cofactor. Formation of the three residue Trp-Tyr-Met cross-link is important for the catalase, but not the peroxidase activity of the enzyme.

It catalyses the reaction H2O2 + AH2 = A + 2 H2O. The enzyme catalyses 2 H2O2 = O2 + 2 H2O. Bifunctional enzyme with both catalase and broad-spectrum peroxidase activity. The chain is Catalase-peroxidase from Syntrophotalea carbinolica (strain DSM 2380 / NBRC 103641 / GraBd1) (Pelobacter carbinolicus).